A 218-amino-acid polypeptide reads, in one-letter code: Ribose-5-phosphate isomerase A (218 aa).

Substrate-binding positions include Thr28–Thr31, Asp81–Asp84, and Lys94–Gly97. Glu103 functions as the Proton acceptor in the catalytic mechanism. A substrate-binding site is contributed by Lys121.

It belongs to the ribose 5-phosphate isomerase family. In terms of assembly, homodimer.

It catalyses the reaction aldehydo-D-ribose 5-phosphate = D-ribulose 5-phosphate. It functions in the pathway carbohydrate degradation; pentose phosphate pathway; D-ribose 5-phosphate from D-ribulose 5-phosphate (non-oxidative stage): step 1/1. Its function is as follows. Catalyzes the reversible conversion of ribose-5-phosphate to ribulose 5-phosphate. The polypeptide is Ribose-5-phosphate isomerase A (Vibrio campbellii (strain ATCC BAA-1116)).